The sequence spans 326 residues: MEGRTLEEVQEEVFKRHGVLVPKKELEDLAKALEEAGLLLTEKVEARLKEEEEKLKRERPMRLAGLSYPEGEREARAFLEAFRASYPGEGEEARVLLMPHLEPSRVPEVYGAALAALEKTPPPERIYLVGVAHRPLKEKAAALPVPFQTPFGPALPDLPALQALDALLPFELFNTPLAFREEHSLELPLFFLKGRFPEARVLPLLVARRSPELGEALKVVLRDFPGLLVLAVDLSHVGPRFGDTPLTRTLAEEARRRDLGFLERLAEGEPEAALAFLGANPTRIDGVEVVASLLPLLRERKGKVLAHRLDLEAPTLSAVGAGTLVL.

Belongs to the MEMO1 family.

The sequence is that of MEMO1 family protein TTHA0924 from Thermus thermophilus (strain ATCC 27634 / DSM 579 / HB8).